Here is a 145-residue protein sequence, read N- to C-terminus: MKVLMQRVSEAHVDVSGRTVGAIDNGLLLFIGIEKHDDTALVDRMVERIIGYRVFADERGKMNWDVRDAGGALLAISQFTLVADTRKGRRPSFSSAADPVLARPLYEHCVAQLKAHGLPVATGVFAAEMQVSLVNDGPVTFMLEM.

The Gly-cisPro motif, important for rejection of L-amino acids signature appears at 137–138 (GP).

This sequence belongs to the DTD family. As to quaternary structure, homodimer.

The protein localises to the cytoplasm. It catalyses the reaction glycyl-tRNA(Ala) + H2O = tRNA(Ala) + glycine + H(+). It carries out the reaction a D-aminoacyl-tRNA + H2O = a tRNA + a D-alpha-amino acid + H(+). An aminoacyl-tRNA editing enzyme that deacylates mischarged D-aminoacyl-tRNAs. Also deacylates mischarged glycyl-tRNA(Ala), protecting cells against glycine mischarging by AlaRS. Acts via tRNA-based rather than protein-based catalysis; rejects L-amino acids rather than detecting D-amino acids in the active site. By recycling D-aminoacyl-tRNA to D-amino acids and free tRNA molecules, this enzyme counteracts the toxicity associated with the formation of D-aminoacyl-tRNA entities in vivo and helps enforce protein L-homochirality. The polypeptide is D-aminoacyl-tRNA deacylase (Alcanivorax borkumensis (strain ATCC 700651 / DSM 11573 / NCIMB 13689 / SK2)).